A 455-amino-acid chain; its full sequence is uncharacterized protein (455 aa).

The next 12 helical transmembrane spans lie at 19 to 39 (FSLF…MFMG), 63 to 83 (ILNL…VIIS), 106 to 126 (FFIS…LLHM), 140 to 160 (FLQV…FSAI), 173 to 195 (VTIG…LFGF), 200 to 222 (VAGV…IVIV), 265 to 285 (MIVT…KVYT), 288 to 308 (ITMF…ILIG), 324 to 344 (MKSL…MTIF), 348 to 368 (LIGL…LIAM), 388 to 408 (AAGD…GIGL), and 410 to 430 (LAYL…ISFI).

It belongs to the multi antimicrobial extrusion (MATE) (TC 2.A.66.1) family.

It localises to the cell membrane. This is an uncharacterized protein from Bacillus subtilis (strain 168).